The following is a 106-amino-acid chain: Large ribosomal subunit protein P1B (106 aa).

S2 carries the N-acetylserine modification. Over residues 69 to 82 (AGAASGAAAAGGDA) the composition is skewed to low complexity. A disordered region spans residues 69 to 106 (AGAASGAAAAGGDAAAEEEKEEEAAEESDDDMGFGLFD). Residues 83–100 (AAEEEKEEEAAEESDDDM) show a composition bias toward acidic residues. S96 carries the post-translational modification Phosphoserine.

The protein belongs to the eukaryotic ribosomal protein P1/P2 family. Component of the large ribosomal subunit (LSU). Mature yeast ribosomes consist of a small (40S) and a large (60S) subunit. The 40S small subunit contains 1 molecule of ribosomal RNA (18S rRNA) and 33 different proteins (encoded by 57 genes). The large 60S subunit contains 3 rRNA molecules (25S, 5.8S and 5S rRNA) and 46 different proteins (encoded by 81 genes). The 5 acidic ribosomal P-proteins form the stalk structure of the 60S subunit. They are organized as a pentameric complex in which uL10/P0 interacts with 2 heterodimers, P1A-P2B and P1B-P2A.

It localises to the cytoplasm. Its function is as follows. Component of the ribosome, a large ribonucleoprotein complex responsible for the synthesis of proteins in the cell. The small ribosomal subunit (SSU) binds messenger RNAs (mRNAs) and translates the encoded message by selecting cognate aminoacyl-transfer RNA (tRNA) molecules. The large subunit (LSU) contains the ribosomal catalytic site termed the peptidyl transferase center (PTC), which catalyzes the formation of peptide bonds, thereby polymerizing the amino acids delivered by tRNAs into a polypeptide chain. The nascent polypeptides leave the ribosome through a tunnel in the LSU and interact with protein factors that function in enzymatic processing, targeting, and the membrane insertion of nascent chains at the exit of the ribosomal tunnel. The chain is Large ribosomal subunit protein P1B from Saccharomyces cerevisiae (strain ATCC 204508 / S288c) (Baker's yeast).